A 309-amino-acid chain; its full sequence is Olfactory receptor 10J5 (309 aa).

The Extracellular portion of the chain corresponds to 1–27; sequence MQRNNFTEVIEFVFLGFSSFGKHQITL. A helical membrane pass occupies residues 28–48; the sequence is FVVFLTIYILTLAGNIIIVTI. Over 49 to 57 the chain is Cytoplasmic; sequence THIDHHLHT. Residues 58–78 traverse the membrane as a helical segment; it reads PMYFFLSMLASSETVYTLVIV. Topologically, residues 79–84 are extracellular; that stretch reads PRMLSS. A helical membrane pass occupies residues 85–105; that stretch reads LIFYNLPISLAGCATQMFFFV. Cysteine 97 and cysteine 178 form a disulfide bridge. The Cytoplasmic portion of the chain corresponds to 106–131; the sequence is TLATNNCFLLTAMGYDRYVAICNPLR. A helical transmembrane segment spans residues 132-152; the sequence is YTIIMSKGMCALLVCGSLGTG. Residues 153–203 lie on the Extracellular side of the membrane; sequence LVMAVLHVPAMFHLPFCGTVVEHFFCDIYPVMKLSCVDTTVNEIINYGVSS. The helical transmembrane segment at 204–224 threads the bilayer; it reads FVILVPIGLIFISYVLIVSSI. Topologically, residues 225-235 are cytoplasmic; that stretch reads LKIVSTEGQKK. Residues 236 to 256 traverse the membrane as a helical segment; sequence AFATCASHLTVVIVHYGCASI. The Extracellular portion of the chain corresponds to 257 to 270; sequence AYLKPKSESSVEKD. A helical membrane pass occupies residues 271 to 291; it reads LLLSVTYTIITPLLNPVVYSL. The Cytoplasmic portion of the chain corresponds to 292–309; that stretch reads RNKEVKDALCRAVGRNTS.

It belongs to the G-protein coupled receptor 1 family. In terms of tissue distribution, expressed in the olfactory epithelium as well as in the testis. Expressed in round spermatids during stages VI-VIII of spermatogenesis.

The protein resides in the cell membrane. In terms of biological role, olfactory receptor. Activated by the synthetic floral odorant, lyral, and by alpha-cedrene, a sesquiterpene constituent of cedarwood oil. Its activation increases intracellular Ca(2+). Acts as a key regulator of myogenesis through its actions on cell migration and adhesion by activating the Ca(2+)-dependent AKT signal transduction pathway. Also acts as a regulator of angiogenesis. Moreover, plays a role in the regulation of lipid accumulation in hepatocytes via the cAMP-PKA pathway. Involved in sperm chemotaxis and motility. This is Olfactory receptor 10J5 from Mus musculus (Mouse).